We begin with the raw amino-acid sequence, 149 residues long: Large ribosomal subunit protein bL9 (149 aa).

It belongs to the bacterial ribosomal protein bL9 family.

In terms of biological role, binds to the 23S rRNA. The polypeptide is Large ribosomal subunit protein bL9 (Alkaliphilus metalliredigens (strain QYMF)).